We begin with the raw amino-acid sequence, 491 residues long: Maintenance of mitochondrial morphology protein 1 (491 aa).

The Lumenal portion of the chain corresponds to 1-22 (MTFQQNEPSAVPAQSSLSFTQG). Residues 23–43 (FLLGQLSVVLLIGAFIKFFIF) traverse the membrane as a helical segment. Residues 44-491 (GEAPPPPSRG…GTLPGGAAAN (448 aa)) are Cytoplasmic-facing. Disordered regions lie at residues 50-95 (PSRG…PVPS), 275-325 (PPLH…SPKS), and 392-491 (RTGV…AAAN). Residues 54-64 (LSHRASTHRRS) show a composition bias toward basic residues. Polar residues-rich tracts occupy residues 65–78 (NSIYTINPNEGTSR) and 85–95 (STSNVLRPVPS). The region spanning 131–384 (QPESLDWFNV…EPRVQVVGLP (254 aa)) is the SMP-LTD domain. The span at 275–287 (PPLHTPSPSPSPP) shows a compositional bias: pro residues. 2 stretches are compositionally biased toward polar residues: residues 300 to 315 (TNGSREPTQEAPNAQE) and 403 to 412 (TGSNAASRSA). Residues 422–434 (RADDIGREPDGLR) are compositionally biased toward basic and acidic residues.

This sequence belongs to the MMM1 family. Homodimer. Component of the ER-mitochondria encounter structure (ERMES) or MDM complex, composed of mmm1, mdm10, mdm12 and mdm34. A mmm1 homodimer associates with one molecule of mdm12 on each side in a pairwise head-to-tail manner, and the SMP-LTD domains of mmm1 and mdm12 generate a continuous hydrophobic tunnel for phospholipid trafficking.

The protein localises to the endoplasmic reticulum membrane. Its function is as follows. Component of the ERMES/MDM complex, which serves as a molecular tether to connect the endoplasmic reticulum (ER) and mitochondria. Components of this complex are involved in the control of mitochondrial shape and protein biogenesis, and function in nonvesicular lipid trafficking between the ER and mitochondria. The mdm12-mmm1 subcomplex functions in the major beta-barrel assembly pathway that is responsible for biogenesis of all outer membrane beta-barrel proteins, and acts in a late step after the SAM complex. The mdm10-mdm12-mmm1 subcomplex further acts in the TOM40-specific pathway after the action of the mdm12-mmm1 complex. Essential for establishing and maintaining the structure of mitochondria and maintenance of mtDNA nucleoids. This Aspergillus flavus (strain ATCC 200026 / FGSC A1120 / IAM 13836 / NRRL 3357 / JCM 12722 / SRRC 167) protein is Maintenance of mitochondrial morphology protein 1.